A 428-amino-acid chain; its full sequence is Adenylosuccinate synthetase (428 aa).

GTP-binding positions include 11-17 (GDEGKGK) and 39-41 (GHT). Asp-12 acts as the Proton acceptor in catalysis. Positions 12 and 39 each coordinate Mg(2+). IMP-binding positions include 12 to 15 (DEGK), 37 to 40 (NAGH), Thr-130, Arg-144, Asn-226, Thr-241, and Arg-305. The Proton donor role is filled by His-40. 301–307 (VTTGRKR) contributes to the substrate binding site. GTP contacts are provided by residues Arg-307, 333 to 335 (KLD), and 415 to 417 (GTG).

The protein belongs to the adenylosuccinate synthetase family. Homodimer. Requires Mg(2+) as cofactor.

It localises to the cytoplasm. It catalyses the reaction IMP + L-aspartate + GTP = N(6)-(1,2-dicarboxyethyl)-AMP + GDP + phosphate + 2 H(+). It functions in the pathway purine metabolism; AMP biosynthesis via de novo pathway; AMP from IMP: step 1/2. In terms of biological role, plays an important role in the de novo pathway and in the salvage pathway of purine nucleotide biosynthesis. Catalyzes the first committed step in the biosynthesis of AMP from IMP. This is Adenylosuccinate synthetase from Candida albicans (strain SC5314 / ATCC MYA-2876) (Yeast).